The primary structure comprises 305 residues: LysM and putative peptidoglycan-binding domain-containing protein 3 (305 aa).

Residues 1 to 216 are Extracellular-facing; sequence MAGRNQNRTV…PYYGADWGIG (216 aa). N-linked (GlcNAc...) asparagine glycans are attached at residues Asn7 and Asn26. The residue at position 55 (Ser55) is a Phosphoserine. One can recognise a LysM domain in the interval 65-109; it reads LTKDIQEGDTLNAVALQYCCTVADIKRVNNLISDQDFFALRSIKI. N-linked (GlcNAc...) asparagine glycosylation occurs at Asn199. The chain crosses the membrane as a helical span at residues 217-237; it reads WWTAVVIMLIVGIITPVFYLL. The Cytoplasmic segment spans residues 238 to 305; the sequence is YYEILAKVDV…PQAHDAQHKT (68 aa). The interval 253-305 is disordered; it reads VGSSHLHPGLTPPTQHREMENEIGPTKGIPVGQQDDHKLYRQDPQAHDAQHKT. The span at 286-305 shows a compositional bias: basic and acidic residues; the sequence is QDDHKLYRQDPQAHDAQHKT.

It localises to the cell membrane. The protein resides in the golgi apparatus. Functionally, essential for Golgi structural integrity. In Mus musculus (Mouse), this protein is LysM and putative peptidoglycan-binding domain-containing protein 3 (Lysmd3).